A 582-amino-acid chain; its full sequence is Protein NARROW LEAF 1 (582 aa).

Disordered regions lie at residues 1–26 (MKPS…VDHQ) and 531–582 (GMSP…DLEK). The span at 562 to 572 (LGDREPKRLRS) shows a compositional bias: basic and acidic residues. Residues 567 to 573 (PKRLRSD) carry the Nuclear localization signal motif. The span at 573–582 (DSGSSLDLEK) shows a compositional bias: low complexity.

Expressed in leaf sheaths, leaf blades, culms and panicles. Preferentially expressed in vascular tissues in leaves and culms.

It localises to the nucleus. The protein localises to the nucleoplasm. It is found in the cytoplasm. In terms of biological role, involved in the regulation of lateral leaf growth. May be involved in the regulation of basipetal polar auxin transport (PAT) and vascular patterning in leaves. Controls photosynthesis rate by regulating carboxylation efficiency and consequently photosynthesis rate. Controls panicle and spikelet numbers, and grain yield. In Oryza sativa subsp. japonica (Rice), this protein is Protein NARROW LEAF 1.